The primary structure comprises 407 residues: Protein-glutamine gamma-glutamyltransferase (407 aa).

An N-terminal signal peptide occupies residues 1–31 (MRIRRRALVFATMSAVLCTAGFMPSAGEAAA). Positions 32–76 (DNGAGEETKSYAETYRLTADDVANINALNESAPAASSAGPSFRAP) are excised as a propeptide. The segment covering 62 to 72 (SAPAASSAGPS) has biased composition (low complexity). The tract at residues 62–98 (SAPAASSAGPSFRAPDSDDRVTPPAEPLDRMPDPYRP) is disordered. Residues 76–94 (PDSDDRVTPPAEPLDRMPD) are compositionally biased toward basic and acidic residues. Residue Cys-140 is part of the active site. The tract at residues 282-322 (QDRSSSADKRKYGDPDAFRPAPGTGLVDMSRDRNIPRSPTS) is disordered. The span at 286 to 298 (SSADKRKYGDPDA) shows a compositional bias: basic and acidic residues. Active-site residues include Asp-331 and His-350.

It belongs to the bacterial TGase family.

It carries out the reaction L-glutaminyl-[protein] + L-lysyl-[protein] = [protein]-L-lysyl-N(6)-5-L-glutamyl-[protein] + NH4(+). In terms of biological role, catalyzes the cross-linking of proteins and the conjugation of polyamines to proteins. This is Protein-glutamine gamma-glutamyltransferase from Streptomyces mobaraensis (Streptoverticillium mobaraense).